A 161-amino-acid polypeptide reads, in one-letter code: Nucleotide-binding protein Veis_3464 (161 aa).

Belongs to the YajQ family.

Its function is as follows. Nucleotide-binding protein. This Verminephrobacter eiseniae (strain EF01-2) protein is Nucleotide-binding protein Veis_3464.